Reading from the N-terminus, the 324-residue chain is Acetyl-coenzyme A carboxylase carboxyl transferase subunit alpha (324 aa).

In terms of domain architecture, CoA carboxyltransferase C-terminal spans 41 to 291 (RLDRLKEKIY…QEYVLQEWLK (251 aa)).

The protein belongs to the AccA family. As to quaternary structure, acetyl-CoA carboxylase is a heterohexamer composed of biotin carboxyl carrier protein (AccB), biotin carboxylase (AccC) and two subunits each of ACCase subunit alpha (AccA) and ACCase subunit beta (AccD).

It localises to the cytoplasm. It catalyses the reaction N(6)-carboxybiotinyl-L-lysyl-[protein] + acetyl-CoA = N(6)-biotinyl-L-lysyl-[protein] + malonyl-CoA. It participates in lipid metabolism; malonyl-CoA biosynthesis; malonyl-CoA from acetyl-CoA: step 1/1. In terms of biological role, component of the acetyl coenzyme A carboxylase (ACC) complex. First, biotin carboxylase catalyzes the carboxylation of biotin on its carrier protein (BCCP) and then the CO(2) group is transferred by the carboxyltransferase to acetyl-CoA to form malonyl-CoA. The sequence is that of Acetyl-coenzyme A carboxylase carboxyl transferase subunit alpha from Chlamydia muridarum (strain MoPn / Nigg).